Consider the following 309-residue polypeptide: MKLNLLLLLFIVELVAAVTNYNLGSAPVSRYLSKTGTYSPVAASRVCNDNCYSFYEGELFCGKFDSNVSETDYLNCLCLNKQYRSNFEGCNCKSESEVNFFDWKSSCSDISSVKNYSLPTTQLGTCNSHCSAYQTIPAECLVYESGKYQEDQVCICQNAEFWYHYENCDCLDFGDVDHEYEDICYYATNSFVTSDDYYDSFFATYTEGSFESILEKGSFLAEQKGSITSGLASKTETSKVSTTTFSSNGTSSGTTNGDTRAETKSSNSTQTSSSDKNSSQINSISSTGVANFVASFGMGTLLLFVLSLC.

The first 17 residues, 1 to 17, serve as a signal peptide directing secretion; sequence MKLNLLLLLFIVELVAA. N-linked (GlcNAc...) asparagine glycosylation is found at Asn67, Asn115, Asn248, Asn267, and Asn277. The segment at 241–281 is disordered; sequence STTTFSSNGTSSGTTNGDTRAETKSSNSTQTSSSDKNSSQI. A lipid anchor (GPI-anchor amidated serine) is attached at Ser286. A propeptide spans 287–309 (removed in mature form); it reads TGVANFVASFGMGTLLLFVLSLC.

This sequence belongs to the IHD1 family. Post-translationally, the GPI-anchor is attached to the protein in the endoplasmic reticulum and serves to target the protein to the cell surface. There, the glucosamine-inositol phospholipid moiety is cleaved off and the GPI-modified mannoprotein is covalently attached via its lipidless GPI glycan remnant to the 1,6-beta-glucan of the outer cell wall layer.

It is found in the secreted. It localises to the cell wall. The protein resides in the membrane. In terms of biological role, probable GPI-anchored cell wall protein that may be involved in cell wall organization, hyphal growth, as well as in virulence. In Candida albicans (strain SC5314 / ATCC MYA-2876) (Yeast), this protein is Probable cell wall protein PGA50 (PGA50).